The chain runs to 258 residues: Phosphate import ATP-binding protein PstB (258 aa).

The 242-residue stretch at 12 to 253 folds into the ABC transporter domain; sequence IQVHNLNFYY…PKMKQTEDYI (242 aa). Residue 44–51 coordinates ATP; the sequence is GPSGCGKS.

Belongs to the ABC transporter superfamily. Phosphate importer (TC 3.A.1.7) family. In terms of assembly, the complex is composed of two ATP-binding proteins (PstB), two transmembrane proteins (PstC and PstA) and a solute-binding protein (PstS).

The protein resides in the cell inner membrane. It carries out the reaction phosphate(out) + ATP + H2O = ADP + 2 phosphate(in) + H(+). Its function is as follows. Part of the ABC transporter complex PstSACB involved in phosphate import. Responsible for energy coupling to the transport system. This chain is Phosphate import ATP-binding protein PstB, found in Photorhabdus laumondii subsp. laumondii (strain DSM 15139 / CIP 105565 / TT01) (Photorhabdus luminescens subsp. laumondii).